A 143-amino-acid polypeptide reads, in one-letter code: Boletus edulis lectin (143 aa).

Residues alanine 30, 49 to 50 (SG), and 72 to 73 (HN) each bind beta-D-Gal-(1-&gt;3)-alpha-D-GalNAc. N-acetyl-alpha-D-galactosamine contacts are provided by residues 49 to 50 (SG) and 72 to 73 (HN). Residues 79–82 (DVVT), arginine 103, and tyrosine 114 contribute to the N,N'-diacetylchitobiose site. N-acetyl-alpha-D-glucosamine-binding positions include 79–82 (DVVT), arginine 103, and tyrosine 114.

The protein belongs to the fungal fruit body lectin family. As to quaternary structure, homotetramer.

Functionally, lectin that recognizes O-linked galactose-beta-1,3-N-acetylgalactosamine, a disaccharide (Thomsen-Friedenreich antigen or T-disaccharide), present on cell surface glycoproteins. Can also bind chitin, N,N'-diacetylchitobiose, N-acetylgalactosamine and N-acetylglucosamine. Inhibits proliferation of colon, breast and liver cancer cell lines (in vitro). The polypeptide is Boletus edulis lectin (Boletus edulis (King bolete)).